We begin with the raw amino-acid sequence, 199 residues long: Recombination protein RecR (199 aa).

Residues 57–72 (CQSCRTFTEETYCPIC) form a C4-type zinc finger. One can recognise a Toprim domain in the interval 81–176 (SVICVVETPA…AVSRIAHGVP (96 aa)).

Belongs to the RecR family.

Its function is as follows. May play a role in DNA repair. It seems to be involved in an RecBC-independent recombinational process of DNA repair. It may act with RecF and RecO. This is Recombination protein RecR from Shewanella piezotolerans (strain WP3 / JCM 13877).